A 393-amino-acid chain; its full sequence is Inulin fructotransferase [DFA-I-forming] (393 aa).

The catalysed reaction is Produces alpha-D-fructofuranose beta-D-fructofuranose 1,2':2,1'-dianhydride (DFA I) by successively eliminating the diminishing (2-&gt;1)-beta-D-fructan (inulin) chain from the terminal D-fructosyl-D-fructosyl disaccharide.. The chain is Inulin fructotransferase [DFA-I-forming] from Arthrobacter globiformis.